The sequence spans 830 residues: Heavy metal tolerance protein (830 aa).

The signal sequence occupies residues 1 to 27 (MVLRYNSPRLNILELVLLYVGFFSIGS). Helical transmembrane passes span 51-71 (PIGIISWWILGIALTYVVDIS), 88-108 (TTVVCLILFLLFWIIVLISCA), and 126-146 (LSVLYVWAIDIVFETIFIVYS). Residue Asn-150 is glycosylated (N-linked (GlcNAc...) asparagine). The next 3 helical transmembrane spans lie at 156–176 (IVLADHVARLVLCVFATAIYL), 263–283 (FQIFICIVLLFLGRAVNILAP), and 304–324 (DVILFVIYRFLQGNMGVIGSL). An ABC transmembrane type-1 domain is found at 265-550 (IFICIVLLFL…FGTLYRSLQN (286 aa)). Residue Asn-350 is glycosylated (N-linked (GlcNAc...) asparagine). The next 2 helical transmembrane spans lie at 381-401 (VVFQIGPVLLDLGVAMVYFFI) and 403-423 (FDIYFTLIVLIMTLCYCYVTV). Glutathione is bound by residues 429–433 (RTEAR), 492–495 (NIVQ), and Gly-542. A helical transmembrane segment spans residues 490–511 (FLNIVQGGIFTFSLAIACLLSA). In terms of domain architecture, ABC transporter spans 584–818 (VIFSHVSFAY…DGGAYKKMWF (235 aa)). ATP contacts are provided by residues Tyr-593 and 617 to 628 (GESGGGKSTIMR).

The protein belongs to the ABC transporter superfamily. ABCB family. Heavy Metal importer (TC 3.A.1.210) subfamily.

Its subcellular location is the vacuole membrane. Its function is as follows. Involved in metal tolerance. Probably involved in the transport of metal-bound phytochelatins. Compartmentalizes cadmium within vacuoles, thereby protecting cells from cadmium toxicity. This is Heavy metal tolerance protein (hmt1) from Schizosaccharomyces pombe (strain 972 / ATCC 24843) (Fission yeast).